The following is a 288-amino-acid chain: Protoheme IX farnesyltransferase 2 (288 aa).

The next 9 membrane-spanning stretches (helical) occupy residues 8–28 (ITKP…FFLA), 36–56 (LMLF…GCVV), 85–105 (VAFV…FQLV), 108–128 (LSAV…TMWY), 131–151 (NSVY…LVGY), 152–172 (LAVT…FCLW), 211–231 (AYVV…EAGY), 233–252 (YLAV…FRSI), and 267–287 (VSLL…IPLA).

This sequence belongs to the UbiA prenyltransferase family. Protoheme IX farnesyltransferase subfamily.

The protein resides in the cell inner membrane. The catalysed reaction is heme b + (2E,6E)-farnesyl diphosphate + H2O = Fe(II)-heme o + diphosphate. It participates in porphyrin-containing compound metabolism; heme O biosynthesis; heme O from protoheme: step 1/1. In terms of biological role, converts heme B (protoheme IX) to heme O by substitution of the vinyl group on carbon 2 of heme B porphyrin ring with a hydroxyethyl farnesyl side group. This Vibrio parahaemolyticus serotype O3:K6 (strain RIMD 2210633) protein is Protoheme IX farnesyltransferase 2.